A 90-amino-acid chain; its full sequence is Small ribosomal subunit protein uS15 (90 aa).

It belongs to the universal ribosomal protein uS15 family. Part of the 30S ribosomal subunit. Forms a bridge to the 50S subunit in the 70S ribosome, contacting the 23S rRNA.

One of the primary rRNA binding proteins, it binds directly to 16S rRNA where it helps nucleate assembly of the platform of the 30S subunit by binding and bridging several RNA helices of the 16S rRNA. In terms of biological role, forms an intersubunit bridge (bridge B4) with the 23S rRNA of the 50S subunit in the ribosome. This Campylobacter concisus (strain 13826) protein is Small ribosomal subunit protein uS15.